A 157-amino-acid polypeptide reads, in one-letter code: Ubiquitin-like protein 4A (157 aa).

Residues 1–76 (MQLTVKALQG…LNLVVKPLEK (76 aa)) form the Ubiquitin-like domain. A Glycyl lysine isopeptide (Lys-Gly) (interchain with G-Cter in ubiquitin) cross-link involves residue Lys48. Phosphoserine is present on Ser90. A required and sufficient for interaction with BAG6 region spans residues 96-138 (WQLISKVLARHFSAADASRVLEQLQRDYERSLSRLTLDDIERL).

In terms of assembly, component of the BAG6/BAT3 complex, at least composed of BAG6, UBL4A and GET4/TRC35. Interacts with BAG6; the interaction is direct and required for UBL4A protein stability. Interacts with USP13; may be indirect via BAG6. Polyubiquitinated. Ubiquitination by AMFR and deubiquitination by USP13 may regulate the interaction between the BAG6/BAT3 complex and SGTA and therefore may regulate client proteins fate.

Its subcellular location is the cytoplasm. The protein localises to the cytosol. The protein resides in the nucleus. As part of a cytosolic protein quality control complex, the BAG6/BAT3 complex, maintains misfolded and hydrophobic patches-containing proteins in a soluble state and participates in their proper delivery to the endoplasmic reticulum or alternatively can promote their sorting to the proteasome where they undergo degradation. The BAG6/BAT3 complex is involved in the post-translational delivery of tail-anchored/type II transmembrane proteins to the endoplasmic reticulum membrane. Recruited to ribosomes, it interacts with the transmembrane region of newly synthesized tail-anchored proteins and together with SGTA and ASNA1 mediates their delivery to the endoplasmic reticulum. Client proteins that cannot be properly delivered to the endoplasmic reticulum are ubiquitinated and sorted to the proteasome. Similarly, the BAG6/BAT3 complex also functions as a sorting platform for proteins of the secretory pathway that are mislocalized to the cytosol either delivering them to the proteasome for degradation or to the endoplasmic reticulum. The BAG6/BAT3 complex also plays a role in the endoplasmic reticulum-associated degradation (ERAD), a quality control mechanism that eliminates unwanted proteins of the endoplasmic reticulum through their retrotranslocation to the cytosol and their targeting to the proteasome. It maintains these retrotranslocated proteins in an unfolded yet soluble state condition in the cytosol to ensure their proper delivery to the proteasome. The polypeptide is Ubiquitin-like protein 4A (Homo sapiens (Human)).